Reading from the N-terminus, the 158-residue chain is Small ribosomal subunit protein uS7 (158 aa).

The protein belongs to the universal ribosomal protein uS7 family. As to quaternary structure, part of the 30S ribosomal subunit. Contacts proteins S9 and S11.

Its function is as follows. One of the primary rRNA binding proteins, it binds directly to 16S rRNA where it nucleates assembly of the head domain of the 30S subunit. Is located at the subunit interface close to the decoding center, probably blocks exit of the E-site tRNA. The chain is Small ribosomal subunit protein uS7 from Christiangramia forsetii (strain DSM 17595 / CGMCC 1.15422 / KT0803) (Gramella forsetii).